We begin with the raw amino-acid sequence, 308 residues long: Ribosomal RNA small subunit methyltransferase H (308 aa).

Residues 33–35, D51, F82, D96, and Q103 contribute to the S-adenosyl-L-methionine site; that span reads GGY.

The protein belongs to the methyltransferase superfamily. RsmH family.

The protein localises to the cytoplasm. It carries out the reaction cytidine(1402) in 16S rRNA + S-adenosyl-L-methionine = N(4)-methylcytidine(1402) in 16S rRNA + S-adenosyl-L-homocysteine + H(+). Functionally, specifically methylates the N4 position of cytidine in position 1402 (C1402) of 16S rRNA. The sequence is that of Ribosomal RNA small subunit methyltransferase H from Rickettsia canadensis (strain McKiel).